The primary structure comprises 236 residues: Increased recombination centers protein 22-2 (236 aa).

A signal peptide spans 1-19 (MKFSAILTALTATIATVAG). Over 20-161 (YETSGKPHTV…AAVSFFDPRL (142 aa)) the chain is Lumenal. The chain crosses the membrane as a helical span at residues 162 to 182 (IFLELVLLATFGGIAYFVYEI). At 183-236 (WGKQYLRGTAPVKVPVKKSGSPVAVKEASPVGSASGFDESWIPEAHLKKNKKKA) the chain is on the cytoplasmic side.

The protein belongs to the IRC22 family.

It localises to the endoplasmic reticulum membrane. Is probably involved in a pathway contributing to genomic integrity. The sequence is that of Increased recombination centers protein 22-2 (IRC22-2) from Candida tropicalis (strain ATCC MYA-3404 / T1) (Yeast).